The sequence spans 212 residues: Prohead core protein protease (212 aa).

Residue histidine 85 is part of the active site. The segment at 117–136 (IEGDHGPGDKLAANIRAGWI) is homomultimerization. The active site involves serine 140. Residues 207-212 (AMKKAL) constitute a propeptide that is removed on maturation.

This sequence belongs to the peptidase U9 family. As to quaternary structure, homopentamer. The self-cleavage of the N-terminus allows the activation of the protease. Probably also self-cleaved at the C-terminus in order to detach the protease from the scaffold protein and allow it to diffuse within the prohead to cleave the prohead proteins. After cleavage of the inner core of the prohead, the gp21 protease also destroys itself into small cleavage products.

In terms of biological role, serine protease ot the inner core, which is activated by autocatalytic cleavage after completion of prohead assembly and processes many prohead proteins. These cleaved peptides from the inner core and the auto-cleaved protease escape from the capsid, thus liberating space for the phage DNA genome. Cleaves the prohead proteins after the sequence motif L/I-X-E. The polypeptide is Prohead core protein protease (21) (Escherichia coli (Bacteriophage T4)).